The following is a 282-amino-acid chain: Proteasome subunit beta (282 aa).

Residues 1–55 (MDNSSTGRYPAASLPPAYLRPGSSSFTDFLRAQAPELLPTARSFPEGSVVQAAHG) constitute a propeptide, removed in mature form; by autocatalysis. Thr-56 functions as the Nucleophile in the catalytic mechanism.

It belongs to the peptidase T1B family. The 20S proteasome core is composed of 14 alpha and 14 beta subunits that assemble into four stacked heptameric rings, resulting in a barrel-shaped structure. The two inner rings, each composed of seven catalytic beta subunits, are sandwiched by two outer rings, each composed of seven alpha subunits. The catalytic chamber with the active sites is on the inside of the barrel. Has a gated structure, the ends of the cylinder being occluded by the N-termini of the alpha-subunits. Is capped by the proteasome-associated ATPase, ARC.

It localises to the cytoplasm. It carries out the reaction Cleavage of peptide bonds with very broad specificity.. The protein operates within protein degradation; proteasomal Pup-dependent pathway. With respect to regulation, the formation of the proteasomal ATPase ARC-20S proteasome complex, likely via the docking of the C-termini of ARC into the intersubunit pockets in the alpha-rings, may trigger opening of the gate for substrate entry. Interconversion between the open-gate and close-gate conformations leads to a dynamic regulation of the 20S proteasome proteolysis activity. Component of the proteasome core, a large protease complex with broad specificity involved in protein degradation. The polypeptide is Proteasome subunit beta (Actinosynnema mirum (strain ATCC 29888 / DSM 43827 / JCM 3225 / NBRC 14064 / NCIMB 13271 / NRRL B-12336 / IMRU 3971 / 101)).